The primary structure comprises 239 residues: 1-(5-phosphoribosyl)-5-[(5-phosphoribosylamino)methylideneamino] imidazole-4-carboxamide isomerase (239 aa).

Asp-9 acts as the Proton acceptor in catalysis. Asp-131 functions as the Proton donor in the catalytic mechanism.

The protein belongs to the HisA/HisF family.

The protein localises to the cytoplasm. The enzyme catalyses 1-(5-phospho-beta-D-ribosyl)-5-[(5-phospho-beta-D-ribosylamino)methylideneamino]imidazole-4-carboxamide = 5-[(5-phospho-1-deoxy-D-ribulos-1-ylimino)methylamino]-1-(5-phospho-beta-D-ribosyl)imidazole-4-carboxamide. The protein operates within amino-acid biosynthesis; L-histidine biosynthesis; L-histidine from 5-phospho-alpha-D-ribose 1-diphosphate: step 4/9. The chain is 1-(5-phosphoribosyl)-5-[(5-phosphoribosylamino)methylideneamino] imidazole-4-carboxamide isomerase from Bacteroides fragilis (strain YCH46).